The following is a 215-amino-acid chain: UPF0502 protein PP_2442 (215 aa).

This sequence belongs to the UPF0502 family.

The chain is UPF0502 protein PP_2442 from Pseudomonas putida (strain ATCC 47054 / DSM 6125 / CFBP 8728 / NCIMB 11950 / KT2440).